Here is a 268-residue protein sequence, read N- to C-terminus: Glutamate racemase (268 aa).

Substrate is bound by residues 14-15 and 46-47; these read DS and YG. The Proton donor/acceptor role is filled by Cys78. 79 to 80 serves as a coordination point for substrate; the sequence is NS. Residue Cys190 is the Proton donor/acceptor of the active site. 191-192 serves as a coordination point for substrate; that stretch reads TH.

The protein belongs to the aspartate/glutamate racemases family.

It carries out the reaction L-glutamate = D-glutamate. It functions in the pathway cell wall biogenesis; peptidoglycan biosynthesis. Functionally, provides the (R)-glutamate required for cell wall biosynthesis. This is Glutamate racemase from Treponema pallidum (strain Nichols).